A 114-amino-acid polypeptide reads, in one-letter code: UPF0757 protein YmgG (114 aa).

It belongs to the UPF0757 family.

The polypeptide is UPF0757 protein YmgG (Escherichia fergusonii (strain ATCC 35469 / DSM 13698 / CCUG 18766 / IAM 14443 / JCM 21226 / LMG 7866 / NBRC 102419 / NCTC 12128 / CDC 0568-73)).